A 227-amino-acid polypeptide reads, in one-letter code: Zinc finger protein ZAT10 (227 aa).

The segment at 80–102 (YKCSVCDKTFSSYQALGGHKASH) adopts a C2H2-type 1 zinc-finger fold. A disordered region spans residues 96 to 128 (GGHKASHRKNLSQTLSGGGDDHSTSSATTTSAV). Positions 119–128 (TSSATTTSAV) are enriched in low complexity. Residues 136-158 (HVCTICNKSFPSGQALGGHKRCH) form a C2H2-type 2 zinc finger. Residues 168–189 (SSVSNSEGAGSTSHVSSSHRGF) are disordered. The span at 174-186 (EGAGSTSHVSSSH) shows a compositional bias: polar residues.

As to expression, expressed in roots, stems and leaves.

The protein resides in the nucleus. Functionally, transcriptional repressor involved in abiotic stress responses. Can repress the stress responsive genes DREB1A and LTI78. Probably involved in jasmonate (JA) early signaling response. May regulate the expression of the JA biosynthesis gene LOX3 and control the expression of TIFY10A/JAZ1, a key repressor in the JA signaling cascade. In Arabidopsis thaliana (Mouse-ear cress), this protein is Zinc finger protein ZAT10 (ZAT10).